Consider the following 151-residue polypeptide: Metallothiol transferase FosB (151 aa).

The VOC domain maps to 4 to 119 (SINHVTYSVS…DGHKFELHTG (116 aa)). The Mg(2+) site is built by His-7, His-66, and Glu-115. Glu-115 (proton donor/acceptor) is an active-site residue.

This sequence belongs to the fosfomycin resistance protein family. FosB subfamily. In terms of assembly, homodimer. Requires Mg(2+) as cofactor.

The protein localises to the cytoplasm. Metallothiol transferase which confers resistance to fosfomycin by catalyzing the addition of a thiol cofactor to fosfomycin. L-cysteine is probably the physiological thiol donor. The protein is Metallothiol transferase FosB of Staphylococcus saprophyticus subsp. saprophyticus (strain ATCC 15305 / DSM 20229 / NCIMB 8711 / NCTC 7292 / S-41).